We begin with the raw amino-acid sequence, 423 residues long: G-protein coupled receptor 83 (423 aa).

An N-terminal signal peptide occupies residues Met1–Ala16. The Extracellular segment spans residues Glu18–Lys71. N-linked (GlcNAc...) asparagine glycans are attached at residues Asn37 and Asn46. The chain crosses the membrane as a helical span at residues Ala72–Val92. At Cys93–Ser107 the chain is on the cytoplasmic side. Residues Leu108–Leu129 traverse the membrane as a helical segment. Topologically, residues Val130–His145 are extracellular. An N-linked (GlcNAc...) asparagine glycan is attached at Asn134. Cysteines 144 and 224 form a disulfide. Residues Val146 to Val167 form a helical membrane-spanning segment. Residues Asp168–Gly186 are Cytoplasmic-facing. A helical transmembrane segment spans residues Val187–Gln208. Topologically, residues Lys209–Tyr238 are extracellular. Residues Leu239–Ala260 form a helical membrane-spanning segment. Residues Arg261–Met293 lie on the Cytoplasmic side of the membrane. Residues Leu294 to Leu315 form a helical membrane-spanning segment. The Extracellular segment spans residues Ser316 to Tyr327. Residues Phe328 to Leu348 form a helical membrane-spanning segment. The Cytoplasmic portion of the chain corresponds to Asn349–Ser423. Residues Pro402–Ser414 show a composition bias toward polar residues. Positions Pro402–Ser423 are disordered.

The protein belongs to the G-protein coupled receptor 1 family. As to expression, highly expressed in the brain and spinal cord, and found in lower concentrations in the thymus and other tissues.

The protein resides in the cell membrane. Functionally, G-protein coupled receptor for PEN, a neuropeptide produced from the precursor protein, proSAAS (encoded by PCSK1N). Acts through a G(i)- and G(q)-alpha-alpha-mediated pathway in response to PEN. Plays a role in food intake and body weight regulation. May contribute to the regulation of anxiety-related behaviors. The protein is G-protein coupled receptor 83 of Homo sapiens (Human).